We begin with the raw amino-acid sequence, 127 residues long: Probable 4-amino-4-deoxy-L-arabinose-phosphoundecaprenol flippase subunit ArnF (127 aa).

Over 1–2 (MG) the chain is Cytoplasmic. The helical transmembrane segment at 3–23 (LLFALGSVVLVSAAQLLLKWA) threads the bilayer. Residues 24-47 (MIQLPDISQLPQFLSSLSQFPLPT) lie on the Periplasmic side of the membrane. A helical membrane pass occupies residues 48–68 (AALFLGLLAYALSMLCWLLAL). Residues 69-76 (KRLPLSRA) are Cytoplasmic-facing. Residues 77–97 (YPLLSLSYLLVWLAALWLPGL) form a helical membrane-spanning segment. Topologically, residues 98 to 102 (NEVFR) are periplasmic. A helical membrane pass occupies residues 103–123 (WGKLAGAGLIVSGLLLICWPA). The Cytoplasmic portion of the chain corresponds to 124-127 (AKTR).

Belongs to the ArnF family. In terms of assembly, heterodimer of ArnE and ArnF.

The protein localises to the cell inner membrane. Its pathway is bacterial outer membrane biogenesis; lipopolysaccharide biosynthesis. In terms of biological role, translocates 4-amino-4-deoxy-L-arabinose-phosphoundecaprenol (alpha-L-Ara4N-phosphoundecaprenol) from the cytoplasmic to the periplasmic side of the inner membrane. This chain is Probable 4-amino-4-deoxy-L-arabinose-phosphoundecaprenol flippase subunit ArnF, found in Erwinia tasmaniensis (strain DSM 17950 / CFBP 7177 / CIP 109463 / NCPPB 4357 / Et1/99).